Here is a 383-residue protein sequence, read N- to C-terminus: Acetylornithine deacetylase (383 aa).

His80 provides a ligand contact to Zn(2+). The active site involves Asp82. Asp112 is a Zn(2+) binding site. Residue Glu144 is part of the active site. Zn(2+)-binding residues include Glu145, Glu169, and His355.

It belongs to the peptidase M20A family. ArgE subfamily. Homodimer. Zn(2+) is required as a cofactor. Co(2+) serves as cofactor. The cofactor is glutathione.

The protein localises to the cytoplasm. It catalyses the reaction N(2)-acetyl-L-ornithine + H2O = L-ornithine + acetate. Its pathway is amino-acid biosynthesis; L-arginine biosynthesis; L-ornithine from N(2)-acetyl-L-ornithine (linear): step 1/1. Its function is as follows. Catalyzes the hydrolysis of the amide bond of N(2)-acetylated L-amino acids. Cleaves the acetyl group from N-acetyl-L-ornithine to form L-ornithine, an intermediate in L-arginine biosynthesis pathway, and a branchpoint in the synthesis of polyamines. This is Acetylornithine deacetylase from Escherichia coli (strain SMS-3-5 / SECEC).